The sequence spans 521 residues: MNPESAQGHGARAPMLQAARGLKANLRDVATRPWRSLARMPKPEVQDPETAAAGHEGLLAIERSFQNAAKSSNLDLMEKLFEKKVNINAVNNMNRTALHFAVGRNSLSAVDFLLSHKARVDVADKHGLTVIHLAAWSGSFEIMLMLVKAGADQRAKNQEGMNALHLAAQNNNLHIVDYLIHDLHLHDLNQPNERGRKPFHLAAERGHVEMIEKLIFLNLHTSEKDKDGNTALHLAAMHGHSPAVQVLLTQWSEVNESNELNVSALQTATRNGHTALVNFLLGENADLQQQKESKEPPLHLAVINNRPAVVNSLLSARHDVDVLDQRRQTPLHVAADLGNVELVETLLKAGCNLKITDKQGKTALAVAARSQHSLVVDMLIKAERYYAWREEHRESIQDSAVSSTLTFKQDHSLETRQIRTLLWNLAYRQLKKKDWQRLARLWSFTEDQIRAIEEQWSGNDSFHEHGYRALLIWLHGALLTQLDPAKQLYEELLCAGFPELAEKIRQFKSKTDSSSKKCAVS.

10 ANK repeats span residues 60–89 (AIER…NINA), 93–122 (MNRT…RVDV), 126–155 (HGLT…DQRA), 159–190 (EGMN…DLNQ), 194–223 (RGRK…HTSE), 227–256 (DGNT…EVNE), 260–289 (LNVS…DLQQ), 293–322 (SKEP…DVDV), 326–355 (RRQT…NLKI), and 359–388 (QGKT…YYAW). Residues 420 to 508 (TLLWNLAYRQ…ELAEKIRQFK (89 aa)) form the Death domain.

The sequence is that of Ankyrin repeat and death domain-containing protein 1B (Ankdd1b) from Mus musculus (Mouse).